Reading from the N-terminus, the 604-residue chain is Glutamine--fructose-6-phosphate aminotransferase [isomerizing] (604 aa).

Cys-2 serves as the catalytic Nucleophile; for GATase activity. Residues 2-218 form the Glutamine amidotransferase type-2 domain; sequence CGIVGVVGNR…DKELVILTKD (217 aa). SIS domains are found at residues 284–423 and 452–594; these read IITS…ANGK and VAEK…VDKP. The active-site For Fru-6P isomerization activity is Lys-599.

Homodimer.

Its subcellular location is the cytoplasm. The catalysed reaction is D-fructose 6-phosphate + L-glutamine = D-glucosamine 6-phosphate + L-glutamate. In terms of biological role, catalyzes the first step in hexosamine metabolism, converting fructose-6P into glucosamine-6P using glutamine as a nitrogen source. This chain is Glutamine--fructose-6-phosphate aminotransferase [isomerizing], found in Streptococcus pyogenes serotype M3 (strain ATCC BAA-595 / MGAS315).